The sequence spans 367 residues: B2 bradykinin receptor (367 aa).

The Extracellular portion of the chain corresponds to 1–36; the sequence is MLNITSQVLAPALNGSVSQSSGCPNTEWSGWLNVIQ. N3 and N14 each carry an N-linked (GlcNAc...) asparagine glycan. The chain crosses the membrane as a helical span at residues 37 to 60; sequence APFLWVLFVLATLENLFVLSVFCL. The Cytoplasmic portion of the chain corresponds to 61-69; it reads HKSSCTVAE. The helical transmembrane segment at 70–94 threads the bilayer; sequence VYLGNLAAADLILACGLPFWAVTIA. Residues 95-107 lie on the Extracellular side of the membrane; sequence NHFDWLFGEALCR. A disulfide bond links C106 and C187. The chain crosses the membrane as a helical span at residues 108 to 129; sequence VVNTMIYMNLYSSICFLMLVSI. The Cytoplasmic portion of the chain corresponds to 130–151; sequence DRYLALVKTMSIGRMRRVRWAK. Y132 carries the post-translational modification Phosphotyrosine. A helical transmembrane segment spans residues 152-174; it reads LYSLVIWGCTLLLSSPMLVFRTM. At 175-197 the chain is on the extracellular side; it reads KDYRDEGYNVTACIIDYPSRSWE. N183 carries N-linked (GlcNAc...) asparagine glycosylation. A helical membrane pass occupies residues 198–224; that stretch reads VFTNVLLNLVGFLLPLSVITFCTVQIL. Over 225 to 243 the chain is Cytoplasmic; that stretch reads QVLRNNEMQKFKEIQTERR. The helical transmembrane segment at 244–268 threads the bilayer; it reads ATVLVLAVLLLFVVCWLPFQVSTFL. Residues 269–287 are Extracellular-facing; the sequence is DTLLKLGVLSSCWDEHVID. The helical transmembrane segment at 288–311 threads the bilayer; the sequence is VITQVGSFMGYSNSCLNPLVYVIV. Over 312-367 the chain is Cytoplasmic; sequence GKRFRKKSREVYRAACPKAGCVLEPVQAESSMGTLRTSISVERQIHKLPEWTRSSQ. Y323 bears the Phosphotyrosine mark. A lipid anchor (S-palmitoyl cysteine) is attached at C327. Phosphoserine is present on S342. A Phosphothreonine modification is found at T345. S349 and S351 each carry phosphoserine; by GRK6.

The protein belongs to the G-protein coupled receptor 1 family. Bradykinin receptor subfamily. BDKRB2 sub-subfamily. In terms of assembly, forms a complex with PECAM1 and GNAQ. Interacts with PECAM1.

The protein resides in the cell membrane. Functionally, receptor for bradykinin. It is associated with G proteins that activate a phosphatidylinositol-calcium second messenger system. The polypeptide is B2 bradykinin receptor (BDKRB2) (Oryctolagus cuniculus (Rabbit)).